Here is a 65-residue protein sequence, read N- to C-terminus: White colony protein WHS11 (65 aa).

The span at 1 to 17 (MSDLGRKDIGDKIESKL) shows a compositional bias: basic and acidic residues. The segment at 1-32 (MSDLGRKDIGDKIESKLTPDSQKSTPEQFKDK) is disordered. The segment covering 18 to 27 (TPDSQKSTPE) has biased composition (polar residues).

This sequence to yeast HSP12/GLP1 and S.pombe hsp9.

The polypeptide is White colony protein WHS11 (WHS11) (Candida albicans (strain WO-1) (Yeast)).